A 517-amino-acid polypeptide reads, in one-letter code: Ammonium transporter 3 (517 aa).

Residues 1 to 32 are Extracellular-facing; that stretch reads MLNEPNALLRRDANSTIATVTELFPNEYSNAD. Residues 33-53 form a helical membrane-spanning segment; the sequence is IAYVLLSTVVVFTVTPGIALY. The Cytoplasmic segment spans residues 54–69; that stretch reads YAGMVRKNSALSILTQ. The helical transmembrane segment at 70–90 threads the bilayer; the sequence is SFLVTAVVFIQWYLFGYSLAC. Topologically, residues 91–118 are extracellular; that stretch reads SSGSSFYGTLWQGGMNHLWLEPYIPGST. Residues 119-139 form a helical membrane-spanning segment; that stretch reads IPAIVYFPFGGLFAVATAQLF. Residues 140 to 148 are Cytoplasmic-facing; the sequence is AGAMAERGR. The chain crosses the membrane as a helical span at residues 149–169; the sequence is LIPSLVISFLYITLVYCPQAY. Over 170 to 180 the chain is Extracellular; that stretch reads WTWAPNGWLYT. Residues 181–201 form a helical membrane-spanning segment; that stretch reads LGALDFAGGGPVHISSGFAAL. Residues 202–272 lie on the Cytoplasmic side of the membrane; that stretch reads AYSLCLGRRI…AHNPPHDAGM (71 aa). Residues 273-293 form a helical membrane-spanning segment; it reads VYIGVVLIWFAWLCFNSGTLL. Topologically, residues 294 to 299 are extracellular; sequence TVNIRT. Residues 300 to 320 form a helical membrane-spanning segment; the sequence is AYIMTNTLISSSFGALTWAII. The Cytoplasmic portion of the chain corresponds to 321–327; it reads DYIRYRK. The chain crosses the membrane as a helical span at residues 328 to 348; that stretch reads FSTIGICEGAIAGLVGITPAC. G349 is a topological domain (extracellular). A helical membrane pass occupies residues 350-370; it reads FVFPWGAAAGGIVPALVCNFL. At 371 to 384 the chain is on the cytoplasmic side; that stretch reads HDLNEWIGVDETLR. A helical transmembrane segment spans residues 385 to 405; sequence VFNLHGIGGIVGSIVLGVVAH. Over 406 to 432 the chain is Extracellular; sequence PDVAASDGATVIDGGWAVHHWKQMGYQ. A helical membrane pass occupies residues 433 to 453; the sequence is FAGFTSVAAWSFVITAIICLL. Residues 454–517 lie on the Cytoplasmic side of the membrane; that stretch reads VDLVPGLHIR…NIKQEKQDEF (64 aa).

The protein belongs to the ammonia transporter channel (TC 1.A.11.2) family.

It is found in the membrane. In terms of biological role, transporter for ammonium to use as a nitrogen source. The protein is Ammonium transporter 3 (amt3) of Schizosaccharomyces pombe (strain 972 / ATCC 24843) (Fission yeast).